Here is a 151-residue protein sequence, read N- to C-terminus: Ubiquitin-conjugating enzyme E2 2 (151 aa).

The segment at Met-1–Ala-26 is disordered. The UBC core domain occupies Thr-4–Thr-150. Cys-88 functions as the Glycyl thioester intermediate in the catalytic mechanism.

This sequence belongs to the ubiquitin-conjugating enzyme family.

The protein resides in the cytoplasm. Its subcellular location is the nucleus. It carries out the reaction S-ubiquitinyl-[E1 ubiquitin-activating enzyme]-L-cysteine + [E2 ubiquitin-conjugating enzyme]-L-cysteine = [E1 ubiquitin-activating enzyme]-L-cysteine + S-ubiquitinyl-[E2 ubiquitin-conjugating enzyme]-L-cysteine.. Its pathway is protein modification; protein ubiquitination. Functionally, catalyzes the covalent attachment of ubiquitin to other proteins. Plays a role in transcription regulation by catalyzing the monoubiquitination of histone H2B to form H2BK123ub1. H2BK123ub1 gives a specific tag for epigenetic transcriptional activation and is also a prerequisite for H3K4me and H3K79me formation. Also involved in postreplication repair of UV-damaged DNA, in N-end rule-dependent protein degradation and in sporulation. This is Ubiquitin-conjugating enzyme E2 2 (UBC2) from Yarrowia lipolytica (strain CLIB 122 / E 150) (Yeast).